A 494-amino-acid chain; its full sequence is Ribose import ATP-binding protein RbsA (494 aa).

ABC transporter domains follow at residues 3–240 and 250–494; these read IEMK…VGRS and SQIS…TGGE. 35-42 contacts ATP; it reads GENGAGKS.

It belongs to the ABC transporter superfamily. Ribose importer (TC 3.A.1.2.1) family. In terms of assembly, the complex is composed of an ATP-binding protein (RbsA), two transmembrane proteins (RbsC) and a solute-binding protein (RbsB).

The protein resides in the cell membrane. It carries out the reaction D-ribose(out) + ATP + H2O = D-ribose(in) + ADP + phosphate + H(+). Part of the ABC transporter complex RbsABC involved in ribose import. Responsible for energy coupling to the transport system. This Bacillus cereus (strain ZK / E33L) protein is Ribose import ATP-binding protein RbsA.